Reading from the N-terminus, the 263-residue chain is 4-hydroxy-2-oxo-heptane-1,7-dioate aldolase (263 aa).

His45 serves as the catalytic Proton acceptor. Gln147 lines the substrate pocket. Glu149 contacts a divalent metal cation. Residues Ala174 and Asp175 each coordinate substrate. Residue Asp175 coordinates a divalent metal cation.

Belongs to the HpcH/HpaI aldolase family. In terms of assembly, homohexamer; trimer of dimers. Requires a divalent metal cation as cofactor.

It carries out the reaction 4-hydroxy-2-oxoheptanedioate = succinate semialdehyde + pyruvate. It participates in aromatic compound metabolism; 4-hydroxyphenylacetate degradation; pyruvate and succinate semialdehyde from 4-hydroxyphenylacetate: step 7/7. Functionally, catalyzes the reversible retro-aldol cleavage of 4-hydroxy-2-ketoheptane-1,7-dioate (HKHD) to pyruvate and succinic semialdehyde. The protein is 4-hydroxy-2-oxo-heptane-1,7-dioate aldolase of Salmonella arizonae (strain ATCC BAA-731 / CDC346-86 / RSK2980).